The primary structure comprises 623 residues: UvrABC system protein C (623 aa).

The region spanning 27–105 is the GIY-YIG domain; sequence GSPGVYRMLD…IKQLKPRYNV (79 aa). Residues 215 to 250 form the UVR domain; the sequence is TKVQANLAEQMQAASEAMEFERAAALRDRIKALTQV.

It belongs to the UvrC family. As to quaternary structure, interacts with UvrB in an incision complex.

Its subcellular location is the cytoplasm. In terms of biological role, the UvrABC repair system catalyzes the recognition and processing of DNA lesions. UvrC both incises the 5' and 3' sides of the lesion. The N-terminal half is responsible for the 3' incision and the C-terminal half is responsible for the 5' incision. The protein is UvrABC system protein C of Cereibacter sphaeroides (strain ATCC 17023 / DSM 158 / JCM 6121 / CCUG 31486 / LMG 2827 / NBRC 12203 / NCIMB 8253 / ATH 2.4.1.) (Rhodobacter sphaeroides).